Consider the following 429-residue polypeptide: Fc receptor-like protein 1 (429 aa).

Residues 1-16 (MLPRLLLLICAPLCEP) form the signal peptide. Ig-like C2-type domains lie at 17-104 (AELF…SQIN), 109-200 (PVAD…VSIT), and 208-291 (PILM…EAVT). Residues 17-307 (AELFLIASPS…TGARSNHLTS (291 aa)) lie on the Extracellular side of the membrane. 3 disulfide bridges follow: C38-C86, C134-C183, and C229-C276. N293 is a glycosylation site (N-linked (GlcNAc...) asparagine). A helical transmembrane segment spans residues 308–328 (GVIEGLLSTLGPATVALLFCY). At 329-429 (GLKRKIGRRS…ITDVDYEDAM (101 aa)) the chain is on the cytoplasmic side. 5 consecutive short sequence motifs (ITIM motif) follow at residues 354–359 (FTYLNS), 367–372 (PIYENV), 379–384 (EVYSLA), 410–415 (DIYSRL), and 423–428 (VDYEDA).

In terms of assembly, interacts with ABL1. Interacts with GRB2 and SOS1. Interacts with SHIP-1/INPP5D. Post-translationally, phosphorylated on tyrosines upon activation. As to expression, primarily expressed in secondary lymphoid tissues by mature subsets of B-cells. Detected in spleen, lymph node, heart, skeletal muscle, kidney, liver and placenta. Specifically expressed by mature B lineage cells with higher expression in naive versus memory B-cells (at protein level).

It is found in the cell membrane. In terms of biological role, type I transmembrane surface glycoprotein preferentially expressed by B-cells that regulates BCR-mediated signaling responses. Recruits ABL1 as the intracellular effector molecule to enhance B-cell activation. Also plays a negative role by suppressing ERK activation under homeostatic and BCR-stimulated conditions in a GRB2-dependent manner. This is Fc receptor-like protein 1 (FCRL1) from Homo sapiens (Human).